We begin with the raw amino-acid sequence, 388 residues long: Succinate--CoA ligase [ADP-forming] subunit beta (388 aa).

The region spanning 9 to 244 is the ATP-grasp domain; that stretch reads KEILRKFGVA…LDEEDPAEIE (236 aa). ATP is bound by residues Lys46, 53–55, Glu99, Ala102, and Glu107; that span reads GRG. Mg(2+)-binding residues include Asn199 and Asp213. Substrate-binding positions include Asn264 and 321 to 323; that span reads GIM.

This sequence belongs to the succinate/malate CoA ligase beta subunit family. Heterotetramer of two alpha and two beta subunits. It depends on Mg(2+) as a cofactor.

The enzyme catalyses succinate + ATP + CoA = succinyl-CoA + ADP + phosphate. It carries out the reaction GTP + succinate + CoA = succinyl-CoA + GDP + phosphate. Its pathway is carbohydrate metabolism; tricarboxylic acid cycle; succinate from succinyl-CoA (ligase route): step 1/1. Succinyl-CoA synthetase functions in the citric acid cycle (TCA), coupling the hydrolysis of succinyl-CoA to the synthesis of either ATP or GTP and thus represents the only step of substrate-level phosphorylation in the TCA. The beta subunit provides nucleotide specificity of the enzyme and binds the substrate succinate, while the binding sites for coenzyme A and phosphate are found in the alpha subunit. The polypeptide is Succinate--CoA ligase [ADP-forming] subunit beta (Burkholderia multivorans (strain ATCC 17616 / 249)).